A 69-amino-acid polypeptide reads, in one-letter code: UPF0337 protein YjbJ (69 aa).

This sequence belongs to the UPF0337 (CsbD) family.

This Escherichia coli O6:H1 (strain CFT073 / ATCC 700928 / UPEC) protein is UPF0337 protein YjbJ (yjbJ).